The primary structure comprises 482 residues: Hydroxymethylglutaryl-CoA synthase A (482 aa).

E85 acts as the Proton donor/acceptor in catalysis. C119 functions as the Acyl-thioester intermediate in the catalytic mechanism. 7 residues coordinate (3S)-3-hydroxy-3-methylglutaryl-CoA: C119, T161, S211, H249, K258, N325, and S358. H249 (proton donor/acceptor) is an active-site residue.

Belongs to the thiolase-like superfamily. HMG-CoA synthase family.

The catalysed reaction is acetoacetyl-CoA + acetyl-CoA + H2O = (3S)-3-hydroxy-3-methylglutaryl-CoA + CoA + H(+). It functions in the pathway metabolic intermediate biosynthesis; (R)-mevalonate biosynthesis; (R)-mevalonate from acetyl-CoA: step 2/3. Functionally, condenses acetyl-CoA with acetoacetyl-CoA to form HMG-CoA, which is the substrate for HMG-CoA reductase. This is Hydroxymethylglutaryl-CoA synthase A (hgsA) from Dictyostelium discoideum (Social amoeba).